We begin with the raw amino-acid sequence, 405 residues long: Phosphopentomutase (405 aa).

Mn(2+)-binding residues include Asp-10, Asp-297, His-302, Asp-338, His-339, and His-350.

Belongs to the phosphopentomutase family. It depends on Mn(2+) as a cofactor.

The protein localises to the cytoplasm. The enzyme catalyses 2-deoxy-alpha-D-ribose 1-phosphate = 2-deoxy-D-ribose 5-phosphate. It catalyses the reaction alpha-D-ribose 1-phosphate = D-ribose 5-phosphate. The protein operates within carbohydrate degradation; 2-deoxy-D-ribose 1-phosphate degradation; D-glyceraldehyde 3-phosphate and acetaldehyde from 2-deoxy-alpha-D-ribose 1-phosphate: step 1/2. Functionally, isomerase that catalyzes the conversion of deoxy-ribose 1-phosphate (dRib-1-P) and ribose 1-phosphate (Rib-1-P) to deoxy-ribose 5-phosphate (dRib-5-P) and ribose 5-phosphate (Rib-5-P), respectively. The polypeptide is Phosphopentomutase (Pseudoalteromonas translucida (strain TAC 125)).